Here is a 152-residue protein sequence, read N- to C-terminus: D-erythrulose-4-phosphate isomerase (152 aa).

The active-site Proton acceptor is Cys-67.

The protein belongs to the LacAB/RpiB family.

It catalyses the reaction D-erythrulose 4-phosphate = D-erythrose 4-phosphate. The protein operates within carbohydrate metabolism. In terms of biological role, involved in catabolism of D-apiose. Catalyzes the isomerization of D-erythrulose 4-phosphate to D-erythrose 4-phosphate. This chain is D-erythrulose-4-phosphate isomerase, found in Pectobacterium atrosepticum (strain SCRI 1043 / ATCC BAA-672) (Erwinia carotovora subsp. atroseptica).